Here is a 180-residue protein sequence, read N- to C-terminus: MSGLTIFSDEQPEQPLWQSRDAEEIQQQLTAIGVRFERWQADRELGENPQPDAVIAAYQHEIDRLVAEKGYQSWDVISMRPDNEQREVLREKFLSEHTHGEDEVRFFVEGAGLFCLHLNSKIYQILCEKNDLLSVPADTPHWFDMGSKPNFTAIRVFDNPEGWVARFTGDKIADSYPRLD.

Positions 97, 99, 103, and 141 each coordinate Fe(2+). The Ni(2+) site is built by His97, His99, Glu103, and His141.

This sequence belongs to the acireductone dioxygenase (ARD) family. As to quaternary structure, monomer. Fe(2+) is required as a cofactor. The cofactor is Ni(2+).

The catalysed reaction is 1,2-dihydroxy-5-(methylsulfanyl)pent-1-en-3-one + O2 = 3-(methylsulfanyl)propanoate + CO + formate + 2 H(+). The enzyme catalyses 1,2-dihydroxy-5-(methylsulfanyl)pent-1-en-3-one + O2 = 4-methylsulfanyl-2-oxobutanoate + formate + 2 H(+). It participates in amino-acid biosynthesis; L-methionine biosynthesis via salvage pathway; L-methionine from S-methyl-5-thio-alpha-D-ribose 1-phosphate: step 5/6. In terms of biological role, catalyzes 2 different reactions between oxygen and the acireductone 1,2-dihydroxy-3-keto-5-methylthiopentene (DHK-MTPene) depending upon the metal bound in the active site. Fe-containing acireductone dioxygenase (Fe-ARD) produces formate and 2-keto-4-methylthiobutyrate (KMTB), the alpha-ketoacid precursor of methionine in the methionine recycle pathway. Ni-containing acireductone dioxygenase (Ni-ARD) produces methylthiopropionate, carbon monoxide and formate, and does not lie on the methionine recycle pathway. This Yersinia enterocolitica serotype O:8 / biotype 1B (strain NCTC 13174 / 8081) protein is Acireductone dioxygenase.